A 327-amino-acid polypeptide reads, in one-letter code: Glycerol-3-phosphate dehydrogenase [NAD(P)+] (327 aa).

Residues F13, R34, and K107 each coordinate NADPH. Sn-glycerol 3-phosphate is bound by residues K107 and G135. A139 provides a ligand contact to NADPH. K190, D243, S253, R254, and N255 together coordinate sn-glycerol 3-phosphate. The active-site Proton acceptor is K190. An NADPH-binding site is contributed by R254. Residues V276 and E277 each contribute to the NADPH site.

It belongs to the NAD-dependent glycerol-3-phosphate dehydrogenase family.

It is found in the cytoplasm. The enzyme catalyses sn-glycerol 3-phosphate + NAD(+) = dihydroxyacetone phosphate + NADH + H(+). The catalysed reaction is sn-glycerol 3-phosphate + NADP(+) = dihydroxyacetone phosphate + NADPH + H(+). Its pathway is membrane lipid metabolism; glycerophospholipid metabolism. Catalyzes the reduction of the glycolytic intermediate dihydroxyacetone phosphate (DHAP) to sn-glycerol 3-phosphate (G3P), the key precursor for phospholipid synthesis. In Rhizobium etli (strain ATCC 51251 / DSM 11541 / JCM 21823 / NBRC 15573 / CFN 42), this protein is Glycerol-3-phosphate dehydrogenase [NAD(P)+].